The chain runs to 373 residues: UDP-N-acetylenolpyruvoylglucosamine reductase (373 aa).

An FAD-binding PCMH-type domain is found at 30–203 (LACMADSVVT…SRVGFRLHTD (174 aa)). The active site involves R180. S258 serves as the catalytic Proton donor. Residue E356 is part of the active site.

It belongs to the MurB family. It depends on FAD as a cofactor.

Its subcellular location is the cytoplasm. The enzyme catalyses UDP-N-acetyl-alpha-D-muramate + NADP(+) = UDP-N-acetyl-3-O-(1-carboxyvinyl)-alpha-D-glucosamine + NADPH + H(+). It participates in cell wall biogenesis; peptidoglycan biosynthesis. Functionally, cell wall formation. This chain is UDP-N-acetylenolpyruvoylglucosamine reductase, found in Psychrobacter cryohalolentis (strain ATCC BAA-1226 / DSM 17306 / VKM B-2378 / K5).